The primary structure comprises 638 residues: 1,4-alpha-glucan branching enzyme GlgB (638 aa).

Asp-303 (nucleophile) is an active-site residue. Catalysis depends on Glu-356, which acts as the Proton donor.

This sequence belongs to the glycosyl hydrolase 13 family. GlgB subfamily. Monomer.

The catalysed reaction is Transfers a segment of a (1-&gt;4)-alpha-D-glucan chain to a primary hydroxy group in a similar glucan chain.. The protein operates within glycan biosynthesis; glycogen biosynthesis. Its function is as follows. Catalyzes the formation of the alpha-1,6-glucosidic linkages in glycogen by scission of a 1,4-alpha-linked oligosaccharide from growing alpha-1,4-glucan chains and the subsequent attachment of the oligosaccharide to the alpha-1,6 position. This Lactobacillus acidophilus (strain ATCC 700396 / NCK56 / N2 / NCFM) protein is 1,4-alpha-glucan branching enzyme GlgB.